The chain runs to 150 residues: uncharacterized protein (150 aa).

This sequence belongs to the aspartate/glutamate racemases family.

This is an uncharacterized protein from Pectobacterium carotovorum subsp. carotovorum (Erwinia carotovora subsp. carotovora).